Consider the following 419-residue polypeptide: Septin-2 (419 aa).

Residues 40–306 (NGFVFNVMCI…ELYRQKRLEQ (267 aa)) form the Septin-type G domain. Residues 50–57 (GETGLGKS) are G1 motif. Residues 50 to 57 (GETGLGKS), S79, G105, 186 to 194 (KADTISKVE), G240, and R255 each bind GTP. The tract at residues 102–105 (DTVG) is G3 motif. Positions 185–188 (AKAD) are G4 motif. The important for dimerization stretch occupies residues 259-269 (WGTVQVENETH).

The protein belongs to the TRAFAC class TrmE-Era-EngA-EngB-Septin-like GTPase superfamily. Septin GTPase family. In terms of assembly, may assemble into a multicomponent structure.

Its subcellular location is the cytoplasm. The protein localises to the cytoskeleton. The protein resides in the spindle. Involved in cytokinesis. The polypeptide is Septin-2 (Drosophila melanogaster (Fruit fly)).